A 110-amino-acid polypeptide reads, in one-letter code: uncharacterized protein (110 aa).

It is found in the mitochondrion. This is an uncharacterized protein from Arabidopsis thaliana (Mouse-ear cress).